The primary structure comprises 213 residues: Superoxide dismutase [Fe] (213 aa).

Residues H28, H82, D164, and H168 each coordinate Fe cation.

Belongs to the iron/manganese superoxide dismutase family. As to quaternary structure, homotetramer. The cofactor is Fe cation.

The catalysed reaction is 2 superoxide + 2 H(+) = H2O2 + O2. In terms of biological role, destroys superoxide anion radicals which are normally produced within the cells and which are toxic to biological systems. This is Superoxide dismutase [Fe] (sodB) from Aquifex aeolicus (strain VF5).